The sequence spans 385 residues: 8-amino-7-oxononanoate synthase (385 aa).

R21 contacts substrate. A pyridoxal 5'-phosphate-binding site is contributed by 108-109 (GF). Residue H133 participates in substrate binding. Residues S179, H207, and T233 each coordinate pyridoxal 5'-phosphate. K236 is subject to N6-(pyridoxal phosphate)lysine. A substrate-binding site is contributed by T352.

It belongs to the class-II pyridoxal-phosphate-dependent aminotransferase family. BioF subfamily. In terms of assembly, homodimer. Pyridoxal 5'-phosphate is required as a cofactor.

The enzyme catalyses 6-carboxyhexanoyl-[ACP] + L-alanine + H(+) = (8S)-8-amino-7-oxononanoate + holo-[ACP] + CO2. It participates in cofactor biosynthesis; biotin biosynthesis. Catalyzes the decarboxylative condensation of pimeloyl-[acyl-carrier protein] and L-alanine to produce 8-amino-7-oxononanoate (AON), [acyl-carrier protein], and carbon dioxide. The sequence is that of 8-amino-7-oxononanoate synthase from Klebsiella pneumoniae (strain 342).